The chain runs to 164 residues: MPLLDSFKVDHTKMPAPAVRLAKVMKTPKGDDISVFDLRFCIPNKDIMSEKGTHTLEHLFAGFMRDHLNSNSVEIIDISPMGCRTGFYMSLIGTPDEKSVAKAWEEAMKDVLSVSDQSKIPELNIYQCGTCAMHSLDEAKQIAQKVLNLGISIMNNKELKLENA.

Residues histidine 54, histidine 58, and cysteine 128 each coordinate Fe cation.

It belongs to the LuxS family. Homodimer. Requires Fe cation as cofactor.

It catalyses the reaction S-(5-deoxy-D-ribos-5-yl)-L-homocysteine = (S)-4,5-dihydroxypentane-2,3-dione + L-homocysteine. Involved in the synthesis of autoinducer 2 (AI-2) which is secreted by bacteria and is used to communicate both the cell density and the metabolic potential of the environment. The regulation of gene expression in response to changes in cell density is called quorum sensing. Catalyzes the transformation of S-ribosylhomocysteine (RHC) to homocysteine (HC) and 4,5-dihydroxy-2,3-pentadione (DPD). The chain is S-ribosylhomocysteine lyase from Campylobacter jejuni subsp. jejuni serotype O:6 (strain 81116 / NCTC 11828).